We begin with the raw amino-acid sequence, 421 residues long: ATP-dependent RNA helicase RhlB (421 aa).

The Q motif motif lies at 9–37 (QKFSDFALHPKVVEALEKKGFHNCTPIQA). The Helicase ATP-binding domain maps to 40–219 (LPLTLAGRDV…FEQMNNAEYI (180 aa)). Residue 53 to 60 (AQTGTGKT) coordinates ATP. Residues 165-168 (DEAD) carry the DEAD box motif. The Helicase C-terminal domain occupies 245 to 390 (RLLQTLIEEE…VSKYNPDALM (146 aa)). The tract at residues 392–421 (DLPKPLRLTRPRTGNGPRRTGAPRNRRRSG) is disordered. Residues 402-414 (PRTGNGPRRTGAP) are compositionally biased toward low complexity.

This sequence belongs to the DEAD box helicase family. RhlB subfamily. As to quaternary structure, component of the RNA degradosome, which is a multiprotein complex involved in RNA processing and mRNA degradation.

Its subcellular location is the cytoplasm. It carries out the reaction ATP + H2O = ADP + phosphate + H(+). DEAD-box RNA helicase involved in RNA degradation. Has RNA-dependent ATPase activity and unwinds double-stranded RNA. The protein is ATP-dependent RNA helicase RhlB of Escherichia coli O157:H7 (strain EC4115 / EHEC).